The sequence spans 146 residues: Transcription initiation factor TFIID subunit 10b (146 aa).

The interval 16–43 (GASSHGQSSGGGGGGDRDRTTPSSHLSD) is disordered.

This sequence belongs to the TAF10 family. Belongs to the TFIID complex which is composed of TATA binding protein (Tbp) and a number of TBP-associated factors (TAFs). The N-terminus interacts with the histone fold of Taf8. In terms of tissue distribution, at embryonic stage 9, expression is seen in the mesodermal layer and midgut primordia. The mesoderm-specific expression persists in later stages of development and at its highest level is detected in midgut, hindgut, and differentiating somatic muscle fibers. Coexpressed with Taf10 in the lateral epidermis and anal plate.

The protein resides in the cytoplasm. It is found in the nucleus. In terms of biological role, TFIID is a multimeric protein complex that plays a central role in mediating promoter responses to various activators and repressors. This chain is Transcription initiation factor TFIID subunit 10b, found in Drosophila melanogaster (Fruit fly).